A 250-amino-acid chain; its full sequence is tRNA (guanine-N(1)-)-methyltransferase (250 aa).

S-adenosyl-L-methionine contacts are provided by residues Gly-116 and 136–141 (IGDYVL).

The protein belongs to the RNA methyltransferase TrmD family. As to quaternary structure, homodimer.

It is found in the cytoplasm. The enzyme catalyses guanosine(37) in tRNA + S-adenosyl-L-methionine = N(1)-methylguanosine(37) in tRNA + S-adenosyl-L-homocysteine + H(+). Functionally, specifically methylates guanosine-37 in various tRNAs. This Pseudomonas fluorescens (strain SBW25) protein is tRNA (guanine-N(1)-)-methyltransferase.